A 1516-amino-acid polypeptide reads, in one-letter code: Myosin-14 (1516 aa).

One can recognise a Myosin N-terminal SH3-like domain in the interval 7-56 (NVGSCVWVEDPEVAWIDGEVIEVKGSDIKVKCTSGKTVAIKVSSAYPKDV). The Myosin motor domain maps to 61–738 (SGVDDMTRLA…QMADLDARRN (678 aa)). Residues 155 to 162 (GESGAGKT) and 208 to 216 (NNNSSRFGK) contribute to the ATP site. Actin-binding regions lie at residues 494 to 528 (LIEK…YQTF), 530 to 553 (DHKH…AGDV), 588 to 612 (FPLL…KQQL), and 612 to 634 (LVTL…KPNN). 6 consecutive IQ domains span residues 741–770 (LGRA…VATN), 764–793 (LRKV…DAAV), 789–818 (RDAA…AAVS), 812–841 (LYFA…DKAA), 837–866 (QDKA…AAIT), and 860–889 (LKKA…AAKE). The stretch at 890–1056 (TGVLEAAKSK…ENKILRQKSL (167 aa)) forms a coiled coil. The disordered stretch occupies residues 1061–1085 (GHLPPTPVKGSQNGHFSSKESPFNG). The segment covering 1069-1084 (KGSQNGHFSSKESPFN) has biased composition (polar residues). A Dilute domain is found at 1158 to 1463 (DRLVQMIGSA…IANMRVLMTE (306 aa)).

It belongs to the TRAFAC class myosin-kinesin ATPase superfamily. Myosin family. Plant myosin class XI subfamily. Homodimer.

Functionally, myosin heavy chain that is required for the cell cycle-regulated transport of various organelles and proteins for their segregation. Functions by binding with its tail domain to receptor proteins on organelles and exerting force with its N-terminal motor domain against actin filaments, thereby transporting its cargo along polarized actin cables. The polypeptide is Myosin-14 (XI-H) (Arabidopsis thaliana (Mouse-ear cress)).